The primary structure comprises 291 residues: Phosphate import ATP-binding protein PstB (291 aa).

The span at 1–17 (MANTNVKEKELAKHTDQ) shows a compositional bias: basic and acidic residues. Residues 1–40 (MANTNVKEKELAKHTDQSQESISTVVSSNEVKHNKESDSN) are disordered. The segment covering 18-29 (SQESISTVVSSN) has biased composition (polar residues). Over residues 30–40 (EVKHNKESDSN) the composition is skewed to basic and acidic residues. The ABC transporter domain occupies 45 to 286 (YSTQNLDLWY…PSDKQTEDYI (242 aa)). Position 77–84 (77–84 (GPSGCGKS)) interacts with ATP.

The protein belongs to the ABC transporter superfamily. Phosphate importer (TC 3.A.1.7) family. As to quaternary structure, the complex is composed of two ATP-binding proteins (PstB), two transmembrane proteins (PstC and PstA) and a solute-binding protein (PstS).

The protein localises to the cell membrane. The catalysed reaction is phosphate(out) + ATP + H2O = ADP + 2 phosphate(in) + H(+). In terms of biological role, part of the ABC transporter complex PstSACB involved in phosphate import. Responsible for energy coupling to the transport system. This chain is Phosphate import ATP-binding protein PstB, found in Staphylococcus haemolyticus (strain JCSC1435).